The chain runs to 364 residues: Cobalt-precorrin-5B C(1)-methyltransferase (364 aa).

Belongs to the CbiD family.

It catalyses the reaction Co-precorrin-5B + S-adenosyl-L-methionine = Co-precorrin-6A + S-adenosyl-L-homocysteine. The protein operates within cofactor biosynthesis; adenosylcobalamin biosynthesis; cob(II)yrinate a,c-diamide from sirohydrochlorin (anaerobic route): step 6/10. Its function is as follows. Catalyzes the methylation of C-1 in cobalt-precorrin-5B to form cobalt-precorrin-6A. This Pseudomonas putida (strain W619) protein is Cobalt-precorrin-5B C(1)-methyltransferase.